The sequence spans 40 residues: Photosystem II reaction center protein J (40 aa).

The chain crosses the membrane as a helical span at residues 8–28 (IPLWVVATIAGLGVITVVGIF).

It belongs to the PsbJ family. PSII is composed of 1 copy each of membrane proteins PsbA, PsbB, PsbC, PsbD, PsbE, PsbF, PsbH, PsbI, PsbJ, PsbK, PsbL, PsbM, PsbT, PsbX, PsbY, PsbZ, Psb30/Ycf12, peripheral proteins PsbO, CyanoQ (PsbQ), PsbU, PsbV and a large number of cofactors. It forms dimeric complexes.

Its subcellular location is the cellular thylakoid membrane. One of the components of the core complex of photosystem II (PSII). PSII is a light-driven water:plastoquinone oxidoreductase that uses light energy to abstract electrons from H(2)O, generating O(2) and a proton gradient subsequently used for ATP formation. It consists of a core antenna complex that captures photons, and an electron transfer chain that converts photonic excitation into a charge separation. The chain is Photosystem II reaction center protein J from Nostoc sp. (strain PCC 7120 / SAG 25.82 / UTEX 2576).